The following is a 494-amino-acid chain: Cobyric acid synthase (494 aa).

Residues 248–444 (EIEIAIIKLP…LHGIFENDEW (197 aa)) form the GATase cobBQ-type domain. The active-site Nucleophile is the Cys-329. The active site involves His-436.

Belongs to the CobB/CobQ family. CobQ subfamily.

It functions in the pathway cofactor biosynthesis; adenosylcobalamin biosynthesis. In terms of biological role, catalyzes amidations at positions B, D, E, and G on adenosylcobyrinic A,C-diamide. NH(2) groups are provided by glutamine, and one molecule of ATP is hydrogenolyzed for each amidation. The sequence is that of Cobyric acid synthase from Prochlorococcus marinus (strain NATL1A).